Consider the following 82-residue polypeptide: UPF0335 protein pRhico085 (82 aa).

The protein belongs to the UPF0335 family.

This chain is UPF0335 protein pRhico085, found in Azospirillum brasilense.